A 281-amino-acid polypeptide reads, in one-letter code: Glyoxalase 1 (281 aa).

VOC domains follow at residues 4–127 (RALH…IGKA) and 132–251 (KVLR…FVGD).

The protein belongs to the glyoxalase I family. As to expression, expressed in the following tissues in both larvae and adults: pharynx, pharyngeal-intestinal valve, intestine, anal sphincter, vulval muscle, seam cells and the nervous system.

Its function is as follows. Thought to act as a glyoxalase. May remove methylglyoxal from mitochondrial proteins. Has roles in reducing oxidative stress and increasing lifespan. The polypeptide is Glyoxalase 1 (glod-4) (Caenorhabditis elegans).